Here is a 407-residue protein sequence, read N- to C-terminus: CCCH-type zinc finger protein oma-1 (407 aa).

The segment at 1–39 (MNVNGENNEKIDEHHLESSLAGVPTLPVSPLDHAKDLSQ) is disordered. Residues 7–17 (NNEKIDEHHLE) show a composition bias toward basic and acidic residues. The segment at 46 to 80 (IGDLVTQTANLIAIKKQLLEDIAFNQHIQSMQVRA) is required for taf-4 binding. 2 C3H1-type zinc fingers span residues 112-140 (SYKT…HGEE) and 154-182 (KYKT…HPDH). Phosphothreonine; by mbk-2 and GSK3 is present on Thr-239. Ser-302 carries the post-translational modification Phosphoserine; by mbk-2. Position 339 is a phosphothreonine; by GSK3 (Thr-339).

Interacts with taf-4 (via C-terminus). Interacts with ifet-1. Component of a ribonucleoprotein particle complex that interacts with cgh-1 and car-1 in an RNA-dependent manner. Association with many proteins is dependent on the presence of RNA. Phosphorylation by mbk-2 and by gsk-3 are required for its rapid degradation following meiosis II. As to expression, exclusively expressed in the hermaphrodite gonad. Expressed prior to oocyte division. Widely distributed throughout gonadal oocytes from the mitotic stage to the developing diakinesis stage. Expressed in sperm.

It localises to the cytoplasm. It is found in the cytoplasmic granule. The protein localises to the nucleus. Its function is as follows. Zinc-finger RNA-binding protein that binds to 5'-UA[AU]-3' motifs in the 3'-UTR of maternal mRNAs to suppress translation in oocytes and embryos. Acts as a ribonucleoprotein particle component that may exert part of its function within cytoplasmic foci of unfertilized oocytes. Acts redundantly with oma-2 to control the temporal expression and distribution of maternal proteins and thereby promote meiotic progression, oocyte maturation, fertilization and embryonic development. Recruits the translational repressor ifet-1 to the 3'-UTR of mei-1 and zif-1 to negatively regulate their translation. By suppressing the translation of the E3 ligase zif-1, may in turn play a role in the stabilization of zif-1 targets such as the maternal transcriptional repressor protein pie-1. Following fertilization, sequesters the transcription initiation factor, taf-4, in the cytoplasm, which prevents its nuclear localization and thus allows for transcriptional suppression in early embryos, but not in oocytes. Also, together with oma-2, is involved in P-granule distribution during embryonic development. The polypeptide is CCCH-type zinc finger protein oma-1 (Caenorhabditis elegans).